Reading from the N-terminus, the 388-residue chain is MTLLNPYFGEFGGMYVPQILMPALFELEKNFVSAQKDAEFQKKFFYLLQNYAGRPTPLTLCKNLTKGTKTKIYLKREDLLHGGAHKTNQVLGQAMLAIRMKKKEIIAETGAGQHGVASAIACALFNLKCRIYMGIKDIKRQNTNVFRMKLMGAEVISVKNGSGTLKDACNEALRDWSSSYKKSHYMIGTAAGPHPYPTIVREFQKMIGEETKKQILEKENKLPDSIIACIGGGSNAIGIFSDFINDKVNLIGVEPAGYGIHTGKHGAPLKHGRTGIYFGMKSHLMQNKQGQIQESWSISAGLDFPSVGPEHAWLNSINRAKYVSITDEEAISAFQVLSRKEGIIPALESSHALAYALKLMKKDPTIEQILIANLSVVEIKIFLQYMMF.

Position 86 is an N6-(pyridoxal phosphate)lysine (Lys-86).

The protein belongs to the TrpB family. As to quaternary structure, tetramer of two alpha and two beta chains. Pyridoxal 5'-phosphate serves as cofactor.

It catalyses the reaction (1S,2R)-1-C-(indol-3-yl)glycerol 3-phosphate + L-serine = D-glyceraldehyde 3-phosphate + L-tryptophan + H2O. It participates in amino-acid biosynthesis; L-tryptophan biosynthesis; L-tryptophan from chorismate: step 5/5. The beta subunit is responsible for the synthesis of L-tryptophan from indole and L-serine. The protein is Tryptophan synthase beta chain (trpB) of Buchnera aphidicola subsp. Acyrthosiphon pisum (strain APS) (Acyrthosiphon pisum symbiotic bacterium).